Here is a 115-residue protein sequence, read N- to C-terminus: Large ribosomal subunit protein bL20 (115 aa).

Belongs to the bacterial ribosomal protein bL20 family.

Functionally, binds directly to 23S ribosomal RNA and is necessary for the in vitro assembly process of the 50S ribosomal subunit. It is not involved in the protein synthesizing functions of that subunit. The chain is Large ribosomal subunit protein bL20 from Prochlorococcus marinus (strain MIT 9215).